The chain runs to 439 residues: Kelch domain-containing protein 10 (439 aa).

A disordered region spans residues 1–50; the sequence is MSAAQGWDRNRRRGGGAAGGASGVSGAGAAGGGRGTGQLNRFVQLSGRPH. Residue arginine 13 is modified to Omega-N-methylarginine. The segment covering 15–36 has biased composition (gly residues); that stretch reads GGAAGGASGVSGAGAAGGGRGT. Kelch repeat units lie at residues 87-154, 155-198, 199-260, 261-319, 320-364, and 365-403; these read PARS…LASM, SLVL…SCRG, KRPS…RYRH, EIAH…HSCV, QIKN…VYFH, and CAAV…PSLL. Positions 398 to 439 are interaction with CUL2; it reads VVPSLLELAWEKLLAAFPNLANLSRTQLLHLGLTQELIERLK.

Belongs to the KLHDC10 family. In terms of assembly, component of a CRL2 E3 ubiquitin-protein ligase complex, also named ECS (Elongin BC-CUL2/5-SOCS-box protein) complex, composed of CUL2, Elongin BC (ELOB and ELOC), RBX1 and substrate-specific adapter KLHDC10. Interacts (via the 6 Kelch repeats) with PPP5C.

It is found in the nucleus. Its subcellular location is the cytoplasm. The protein operates within protein modification; protein ubiquitination. Its function is as follows. Substrate-recognition component of a Cul2-RING (CRL2) E3 ubiquitin-protein ligase complex of the DesCEND (destruction via C-end degrons) pathway, which recognizes a C-degron located at the extreme C-terminus of target proteins, leading to their ubiquitination and degradation. The C-degron recognized by the DesCEND pathway is usually a motif of less than ten residues and can be present in full-length proteins, truncated proteins or proteolytically cleaved forms. The CRL2(KLHDC10) complex specifically recognizes proteins with a proline-glycine (Pro-Gly) or an alanine tail (CAT tail) at the C-terminus, leading to their ubiquitination and degradation. The CRL2(KLHDC10) complex is involved in the ribosome-associated quality control (RQC) pathway, which mediates the extraction of incompletely synthesized nascent chains from stalled ribosomes: CRL2(KLHDC10) acts downstream of NEMF and recognizes CAT tails associated with stalled nascent chains, leading to their ubiquitination and degradation. Participates in the oxidative stress-induced cell death through MAP3K5 activation. Inhibits PPP5C phosphatase activity on MAP3K5. Acts as a regulator of necroptosis. This is Kelch domain-containing protein 10 from Mus musculus (Mouse).